The sequence spans 93 residues: Large ribosomal subunit protein uL23 (93 aa).

It belongs to the universal ribosomal protein uL23 family. As to quaternary structure, part of the 50S ribosomal subunit. Contacts protein L29, and trigger factor when it is bound to the ribosome.

One of the early assembly proteins it binds 23S rRNA. One of the proteins that surrounds the polypeptide exit tunnel on the outside of the ribosome. Forms the main docking site for trigger factor binding to the ribosome. This is Large ribosomal subunit protein uL23 from Helicobacter acinonychis (strain Sheeba).